Reading from the N-terminus, the 169-residue chain is Ubiquitin-fold modifier-conjugating enzyme 1 (169 aa).

Cys-116 (glycyl thioester intermediate) is an active-site residue.

Belongs to the ubiquitin-conjugating enzyme family. UFC1 subfamily.

In terms of biological role, E2-like enzyme which forms an intermediate with UFM1 via a thioester linkage. The sequence is that of Ubiquitin-fold modifier-conjugating enzyme 1 from Nematostella vectensis (Starlet sea anemone).